We begin with the raw amino-acid sequence, 930 residues long: Semaphorin-6C (930 aa).

An N-terminal signal peptide occupies residues 1-24 (MPRAPHFMPLLLLLLLLSLPHTQA). The Extracellular segment spans residues 25-604 (AFPQDPLPLL…ASASRSVPIP (580 aa)). The 487-residue stretch at 30–516 (PLPLLISDLQ…FSGCIVYLPL (487 aa)) folds into the Sema domain. N-linked (GlcNAc...) asparagine glycosylation is present at Asn-70. Intrachain disulfides connect Cys-111–Cys-121, Cys-139–Cys-148, Cys-262–Cys-373, and Cys-287–Cys-332. An N-linked (GlcNAc...) asparagine glycan is attached at Asn-286. The N-linked (GlcNAc...) asparagine glycan is linked to Asn-437. 4 cysteine pairs are disulfide-bonded: Cys-479–Cys-510, Cys-519–Cys-537, Cys-525–Cys-570, and Cys-529–Cys-545. The segment at 554–593 (TDVDQAGNQESMEHGDCQDGATGSQSGPGDSAYGVRRDLP) is disordered. A helical transmembrane segment spans residues 605 to 625 (LLLASVAAAFALGASVSGLLV). At 626–930 (SCACRRAHRR…AVPNGGRFNF (305 aa)) the chain is on the cytoplasmic side. Disordered stretches follow at residues 654–674 (LARL…GDAV), 716–761 (GDPW…PGQA), 775–882 (HGPQ…PGKH), and 908–930 (SLKP…RFNF). A compositionally biased stretch (low complexity) spans 829–844 (ASAPARPALSAPAPRL).

The protein belongs to the semaphorin family. As to expression, in adult tissues, expressed only in skeletal muscle.

It is found in the cell membrane. Functionally, shows growth cone collapsing activity on dorsal root ganglion (DRG) neurons in vitro. May be a stop signal for the DRG neurons in their target areas, and possibly also for other neurons. May also be involved in the maintenance and remodeling of neuronal connections. The polypeptide is Semaphorin-6C (SEMA6C) (Homo sapiens (Human)).